The sequence spans 150 residues: MQVILLDKVANLGGLGEQVNVKAGYARNYLVPQGKAVPATKKNVEYFEERRAELEAKLAETQAAAEARAAKINELGIVTIPSKAGDEGKLFGSIGTRDIADAITAAGINVSKSEVRLPNGVLRTTGDHDVSIQVHSEVFASLNVVIVPEA.

Belongs to the bacterial ribosomal protein bL9 family.

Functionally, binds to the 23S rRNA. In Sodalis glossinidius (strain morsitans), this protein is Large ribosomal subunit protein bL9.